We begin with the raw amino-acid sequence, 226 residues long: Ribose-5-phosphate isomerase A (226 aa).

Residues 28–31 (TGST), 84–87 (DGAD), and 97–100 (KGLG) each bind substrate. Catalysis depends on Glu106, which acts as the Proton acceptor. Position 124 (Lys124) interacts with substrate.

It belongs to the ribose 5-phosphate isomerase family. As to quaternary structure, homodimer.

It carries out the reaction aldehydo-D-ribose 5-phosphate = D-ribulose 5-phosphate. The protein operates within carbohydrate degradation; pentose phosphate pathway; D-ribose 5-phosphate from D-ribulose 5-phosphate (non-oxidative stage): step 1/1. Its function is as follows. Catalyzes the reversible conversion of ribose-5-phosphate to ribulose 5-phosphate. This chain is Ribose-5-phosphate isomerase A, found in Deinococcus radiodurans (strain ATCC 13939 / DSM 20539 / JCM 16871 / CCUG 27074 / LMG 4051 / NBRC 15346 / NCIMB 9279 / VKM B-1422 / R1).